We begin with the raw amino-acid sequence, 244 residues long: 2-C-methyl-D-erythritol 4-phosphate cytidylyltransferase (244 aa).

Belongs to the IspD/TarI cytidylyltransferase family. IspD subfamily.

It carries out the reaction 2-C-methyl-D-erythritol 4-phosphate + CTP + H(+) = 4-CDP-2-C-methyl-D-erythritol + diphosphate. The protein operates within isoprenoid biosynthesis; isopentenyl diphosphate biosynthesis via DXP pathway; isopentenyl diphosphate from 1-deoxy-D-xylulose 5-phosphate: step 2/6. Its function is as follows. Catalyzes the formation of 4-diphosphocytidyl-2-C-methyl-D-erythritol from CTP and 2-C-methyl-D-erythritol 4-phosphate (MEP). The chain is 2-C-methyl-D-erythritol 4-phosphate cytidylyltransferase from Solibacter usitatus (strain Ellin6076).